Here is a 282-residue protein sequence, read N- to C-terminus: Putative 4-diphosphocytidyl-2-C-methyl-D-erythritol kinase (282 aa).

Residue Lys9 is part of the active site. ATP is bound at residue 93-103 (PVSAGLAGGSA). Residue Asp135 is part of the active site.

This sequence belongs to the GHMP kinase family. IspE subfamily.

It carries out the reaction 4-CDP-2-C-methyl-D-erythritol + ATP = 4-CDP-2-C-methyl-D-erythritol 2-phosphate + ADP + H(+). In terms of biological role, catalyzes the phosphorylation of the position 2 hydroxy group of 4-diphosphocytidyl-2C-methyl-D-erythritol. In Staphylococcus aureus (strain MSSA476), this protein is Putative 4-diphosphocytidyl-2-C-methyl-D-erythritol kinase.